Consider the following 87-residue polypeptide: Exendin-4 (87 aa).

The first 23 residues, 1–23, serve as a signal peptide directing secretion; sequence MKIILWLCVFGLFLATLFPISWQ. Positions 24-45 are excised as a propeptide; sequence MPVESGLSSEDSASSESFASKI. A Serine amide modification is found at Ser86.

It belongs to the glucagon family. In terms of tissue distribution, expressed by the venom gland.

The protein resides in the secreted. Functionally, venom protein that mimics the incretin hormone glucagon-like peptide 1 (GLP-1). It stimulates insulin synthesis and secretion, protects against beta-cell apoptosis in response to different insults, and promotes beta-cell proliferation It also promotes satiety, reduces food intake, reduces fat deposition, reduces body weight and inhibits gastric emptying. Interacts with GLP-1 receptor (GLP1R). Induces hypotension that is mediated by relaxation of cardiac smooth muscle. The protein is Exendin-4 of Heloderma suspectum cinctum (Banded Gila monster).